A 596-amino-acid polypeptide reads, in one-letter code: Aspartate--tRNA(Asp/Asn) ligase (596 aa).

Glu175 is an L-aspartate binding site. The tract at residues 199–202 (QQYK) is aspartate. Residues Arg221 and His454 each coordinate L-aspartate. Residue 221-223 (RDE) coordinates ATP. Glu488 serves as a coordination point for ATP. Arg495 contacts L-aspartate. Residue 540–543 (GVDR) participates in ATP binding.

This sequence belongs to the class-II aminoacyl-tRNA synthetase family. Type 1 subfamily. Homodimer.

The protein localises to the cytoplasm. It carries out the reaction tRNA(Asx) + L-aspartate + ATP = L-aspartyl-tRNA(Asx) + AMP + diphosphate. Aspartyl-tRNA synthetase with relaxed tRNA specificity since it is able to aspartylate not only its cognate tRNA(Asp) but also tRNA(Asn). Reaction proceeds in two steps: L-aspartate is first activated by ATP to form Asp-AMP and then transferred to the acceptor end of tRNA(Asp/Asn). This Bartonella bacilliformis (strain ATCC 35685 / KC583 / Herrer 020/F12,63) protein is Aspartate--tRNA(Asp/Asn) ligase.